The following is a 427-amino-acid chain: Phosphatidate cytidylyltransferase, mitochondrial (427 aa).

Positions 94–106 (YNRNGDGSTSTEN) are enriched in polar residues. The disordered stretch occupies residues 94–113 (YNRNGDGSTSTENPSKKEEQ).

The protein belongs to the TAM41 family. Mg(2+) is required as a cofactor.

Its subcellular location is the mitochondrion inner membrane. The enzyme catalyses a 1,2-diacyl-sn-glycero-3-phosphate + CTP + H(+) = a CDP-1,2-diacyl-sn-glycerol + diphosphate. The protein operates within phospholipid metabolism; CDP-diacylglycerol biosynthesis; CDP-diacylglycerol from sn-glycerol 3-phosphate: step 3/3. Its function is as follows. Catalyzes the formation of CDP-diacylglycerol (CDP-DAG) from phosphatidic acid (PA) in the mitochondrial inner membrane. Required for the biosynthesis of the dimeric phospholipid cardiolipin, which stabilizes supercomplexes of the mitochondrial respiratory chain in the mitochondrial inner membrane. This is Phosphatidate cytidylyltransferase, mitochondrial from Dictyostelium discoideum (Social amoeba).